The following is a 235-amino-acid chain: 2,3,4,5-tetrahydropyridine-2,6-dicarboxylate N-acetyltransferase (235 aa).

It belongs to the transferase hexapeptide repeat family. DapH subfamily.

The enzyme catalyses (S)-2,3,4,5-tetrahydrodipicolinate + acetyl-CoA + H2O = L-2-acetamido-6-oxoheptanedioate + CoA. It functions in the pathway amino-acid biosynthesis; L-lysine biosynthesis via DAP pathway; LL-2,6-diaminopimelate from (S)-tetrahydrodipicolinate (acetylase route): step 1/3. Catalyzes the transfer of an acetyl group from acetyl-CoA to tetrahydrodipicolinate. This is 2,3,4,5-tetrahydropyridine-2,6-dicarboxylate N-acetyltransferase from Exiguobacterium sp. (strain ATCC BAA-1283 / AT1b).